An 860-amino-acid chain; its full sequence is Leucine--tRNA ligase (860 aa).

The 'HIGH' region motif lies at 42-52 (PYPSGRLHMGH). The short motif at 619–623 (KMSKS) is the 'KMSKS' region element. Lys622 is a binding site for ATP.

This sequence belongs to the class-I aminoacyl-tRNA synthetase family.

Its subcellular location is the cytoplasm. The enzyme catalyses tRNA(Leu) + L-leucine + ATP = L-leucyl-tRNA(Leu) + AMP + diphosphate. The chain is Leucine--tRNA ligase from Proteus mirabilis (strain HI4320).